We begin with the raw amino-acid sequence, 365 residues long: Probable protein kinase At2g41970 (365 aa).

The interval 1-50 (MFCCGGADEEPAGPPANQYAAPPNKAGNPNFGGGNRGEPRNPNAPRSGAP) is disordered. In terms of domain architecture, Protein kinase spans 73–354 (FGNKALIGEG…IVVKALQPLL (282 aa)). Residues 79-87 (IGEGSYGRV) and Lys-100 each bind ATP. A Phosphotyrosine modification is found at Tyr-146. Asp-204 functions as the Proton acceptor in the catalytic mechanism. Residues Ser-208 and Ser-238 each carry the phosphoserine modification. A phosphothreonine mark is found at Thr-239 and Thr-244. Residue Tyr-252 is modified to Phosphotyrosine.

This sequence belongs to the protein kinase superfamily. Tyr protein kinase family.

The protein is Probable protein kinase At2g41970 of Arabidopsis thaliana (Mouse-ear cress).